The chain runs to 185 residues: Elongation factor P (185 aa).

It belongs to the elongation factor P family.

The protein resides in the cytoplasm. It functions in the pathway protein biosynthesis; polypeptide chain elongation. In terms of biological role, involved in peptide bond synthesis. Stimulates efficient translation and peptide-bond synthesis on native or reconstituted 70S ribosomes in vitro. Probably functions indirectly by altering the affinity of the ribosome for aminoacyl-tRNA, thus increasing their reactivity as acceptors for peptidyl transferase. This Carboxydothermus hydrogenoformans (strain ATCC BAA-161 / DSM 6008 / Z-2901) protein is Elongation factor P.